A 481-amino-acid chain; its full sequence is Beta-amyrin 28-monooxygenase (481 aa).

A helical membrane pass occupies residues 4 to 24 (FYVPLLSLFVLFVSLSFYFLF). Cysteine 428 is a heme binding site.

Belongs to the cytochrome P450 family. The cofactor is heme.

The protein resides in the membrane. The catalysed reaction is beta-amyrin + 3 reduced [NADPH--hemoprotein reductase] + 3 O2 = oleanolate + 3 oxidized [NADPH--hemoprotein reductase] + 4 H2O + 4 H(+). Catalyzes the oxidation of the methyl group to a carboxyl group at the C-28 position of beta-amyrin to form oleanolate. The chain is Beta-amyrin 28-monooxygenase from Kalopanax septemlobus (Castor aralia).